Reading from the N-terminus, the 689-residue chain is Methionine--tRNA ligase (689 aa).

Residues 15–25 carry the 'HIGH' region motif; it reads PYANGPIHLGH. Residues cysteine 146, cysteine 149, cysteine 159, and cysteine 162 each coordinate Zn(2+). The short motif at 332–336 is the 'KMSKS' region element; sequence KMSKS. Lysine 335 is a binding site for ATP. The disordered stretch occupies residues 546–577; the sequence is KDNLQPTEAPKADKKADKKVEKKATTGDPLTD. Positions 555–570 are enriched in basic and acidic residues; that stretch reads PKADKKADKKVEKKAT. Residues 588–689 form the tRNA-binding domain; the sequence is DFAKLDLRIA…QGAKPGMRVK (102 aa).

It belongs to the class-I aminoacyl-tRNA synthetase family. MetG type 1 subfamily. Homodimer. Requires Zn(2+) as cofactor.

It is found in the cytoplasm. The enzyme catalyses tRNA(Met) + L-methionine + ATP = L-methionyl-tRNA(Met) + AMP + diphosphate. Is required not only for elongation of protein synthesis but also for the initiation of all mRNA translation through initiator tRNA(fMet) aminoacylation. In Shewanella denitrificans (strain OS217 / ATCC BAA-1090 / DSM 15013), this protein is Methionine--tRNA ligase.